We begin with the raw amino-acid sequence, 527 residues long: UDP-glucuronosyltransferase 2A1 (527 aa).

The N-terminal stretch at 1 to 20 is a signal peptide; it reads MLNNLLLFSLQISLIGTTLG. Topologically, residues 21–491 are lumenal; that stretch reads GNVLIWPMEG…TWFQYHSLDV (471 aa). Residues Asn-49, Leu-313, and Asn-347 are each glycosylated (N-linked (GlcNAc...) asparagine). Residues 492–512 traverse the membrane as a helical segment; the sequence is IGFLLVCVTTAIFLVIQCCLF. Topologically, residues 513 to 527 are cytoplasmic; the sequence is SCQKFGKIGKKKKRE.

It belongs to the UDP-glycosyltransferase family. Olfactory epithelium, brain and fetal lung. Not present in liver.

It localises to the membrane. Its subcellular location is the endoplasmic reticulum membrane. It catalyses the reaction glucuronate acceptor + UDP-alpha-D-glucuronate = acceptor beta-D-glucuronoside + UDP + H(+). The catalysed reaction is 16beta,17beta-estriol + UDP-alpha-D-glucuronate = 16beta,17beta-estriol 16-O-(beta-D-glucuronate) + UDP + H(+). It carries out the reaction 16alpha,17alpha-estriol + UDP-alpha-D-glucuronate = 16alpha,17alpha-estriol 16-O-(beta-D-glucuronate) + UDP + H(+). The enzyme catalyses 17alpha-estradiol + UDP-alpha-D-glucuronate = 17alpha-estradiol 17-O-(beta-D-glucuronate) + UDP + H(+). It catalyses the reaction 17alpha-estradiol + UDP-alpha-D-glucuronate = 17alpha-estradiol 3-O-(beta-D-glucuronate) + UDP + H(+). The catalysed reaction is 17beta-estradiol + UDP-alpha-D-glucuronate = 17beta-estradiol 3-O-(beta-D-glucuronate) + UDP + H(+). It carries out the reaction 17beta-estradiol + UDP-alpha-D-glucuronate = 17beta-estradiol 17-O-(beta-D-glucuronate) + UDP + H(+). The enzyme catalyses testosterone + UDP-alpha-D-glucuronate = testosterone 17-O-(beta-D-glucuronate) + UDP + H(+). It catalyses the reaction epitestosterone + UDP-alpha-D-glucuronate = epitestosterone 17-O-(beta-D-glucuronate) + UDP + H(+). The catalysed reaction is lithocholate + UDP-alpha-D-glucuronate = lithocholoyl-3-O-(beta-D-glucuronate) + UDP + H(+). It carries out the reaction lithocholate + UDP-alpha-D-glucuronate = lithocholoyl-24-O-(beta-D-glucuronate) + UDP. The enzyme catalyses deoxycholate + UDP-alpha-D-glucuronate = deoxycholoyl-24-O-(beta-D-glucuronate) + UDP. It catalyses the reaction hyodeoxycholate + UDP-alpha-D-glucuronate = hyodeoxycholoyl-24-O-(beta-D-glucuronate) + UDP. The catalysed reaction is hyocholate + UDP-alpha-D-glucuronate = hyocholoyl-24-O-(beta-D-glucuronate) + UDP. In terms of biological role, UDP-glucuronosyltransferase (UGT) that catalyzes phase II biotransformation reactions in which lipophilic substrates are conjugated with glucuronic acid to increase the metabolite's water solubility, thereby facilitating excretion into either the urine or bile. Essential for the elimination and detoxification of drugs, xenobiotics and endogenous compounds. Catalyzes the glucuronidation of endogenous steroid hormones such as androgens (testosterone and epitestosterone) and estrogens (estradiol and epiestriol). Contributes to bile acid (BA) detoxification by catalyzing the glucuronidation of BA substrates, which are natural detergents for dietary lipids absorption. Shows a high affinity to aliphatic odorants such as citronellol as well as olfactory tissue specificity, and therefore may be involved in olfaction. Shows a potential role in detoxification of toxic waste compounds in the amniotic fluid before birth, and air-born chemical after birth. This Homo sapiens (Human) protein is UDP-glucuronosyltransferase 2A1.